The chain runs to 717 residues: Fatty acid oxidation complex subunit alpha (717 aa).

An enoyl-CoA hydratase/isomerase region spans residues methionine 1–alanine 189. Aspartate 296 provides a ligand contact to substrate. The segment at lysine 311–alanine 717 is 3-hydroxyacyl-CoA dehydrogenase. NAD(+)-binding positions include methionine 324, aspartate 343, valine 400 to glutamate 402, lysine 407, and serine 429. Residue histidine 450 is the For 3-hydroxyacyl-CoA dehydrogenase activity of the active site. Asparagine 453 is an NAD(+) binding site. Substrate-binding residues include asparagine 500 and tyrosine 660.

This sequence in the N-terminal section; belongs to the enoyl-CoA hydratase/isomerase family. In the C-terminal section; belongs to the 3-hydroxyacyl-CoA dehydrogenase family. In terms of assembly, heterotetramer of two alpha chains (FadB) and two beta chains (FadA).

The catalysed reaction is a (3S)-3-hydroxyacyl-CoA + NAD(+) = a 3-oxoacyl-CoA + NADH + H(+). It catalyses the reaction a (3S)-3-hydroxyacyl-CoA = a (2E)-enoyl-CoA + H2O. It carries out the reaction a 4-saturated-(3S)-3-hydroxyacyl-CoA = a (3E)-enoyl-CoA + H2O. The enzyme catalyses (3S)-3-hydroxybutanoyl-CoA = (3R)-3-hydroxybutanoyl-CoA. The catalysed reaction is a (3Z)-enoyl-CoA = a 4-saturated (2E)-enoyl-CoA. It catalyses the reaction a (3E)-enoyl-CoA = a 4-saturated (2E)-enoyl-CoA. The protein operates within lipid metabolism; fatty acid beta-oxidation. In terms of biological role, involved in the aerobic and anaerobic degradation of long-chain fatty acids via beta-oxidation cycle. Catalyzes the formation of 3-oxoacyl-CoA from enoyl-CoA via L-3-hydroxyacyl-CoA. It can also use D-3-hydroxyacyl-CoA and cis-3-enoyl-CoA as substrate. In Shewanella halifaxensis (strain HAW-EB4), this protein is Fatty acid oxidation complex subunit alpha.